A 408-amino-acid chain; its full sequence is Imidazolonepropionase (408 aa).

Residues His-72 and His-74 each coordinate Fe(3+). Positions 72 and 74 each coordinate Zn(2+). Positions 81, 144, and 177 each coordinate 4-imidazolone-5-propanoate. Tyr-144 lines the N-formimidoyl-L-glutamate pocket. His-242 contacts Fe(3+). His-242 contributes to the Zn(2+) binding site. Gln-245 provides a ligand contact to 4-imidazolone-5-propanoate. Asp-317 contacts Fe(3+). Residue Asp-317 participates in Zn(2+) binding. N-formimidoyl-L-glutamate is bound by residues Asn-319 and Gly-321. Residue Thr-322 coordinates 4-imidazolone-5-propanoate.

The protein belongs to the metallo-dependent hydrolases superfamily. HutI family. Zn(2+) serves as cofactor. The cofactor is Fe(3+).

It is found in the cytoplasm. It carries out the reaction 4-imidazolone-5-propanoate + H2O = N-formimidoyl-L-glutamate. Its pathway is amino-acid degradation; L-histidine degradation into L-glutamate; N-formimidoyl-L-glutamate from L-histidine: step 3/3. Catalyzes the hydrolytic cleavage of the carbon-nitrogen bond in imidazolone-5-propanoate to yield N-formimidoyl-L-glutamate. It is the third step in the universal histidine degradation pathway. In Aliivibrio fischeri (strain MJ11) (Vibrio fischeri), this protein is Imidazolonepropionase.